A 340-amino-acid chain; its full sequence is MLNKKIKKNHKEDWITELTNAITNPDELLRTLNLKSNTKYFKNIQVQKLFSLRVPKTFVSRMKKNDPFDPLLLQILPHTKELKNNHNFVQDPLEETKNVIIPGLIRKYNNRILLLLKTNCAINCRYCFRRYFPYSQHPGNKENLNLAIQYIKNQTDLNEVILSGGDPLMAKDHEIQWIVNTLSNIYHIKRLRIHTRLPIVIPSRITNNLCKILSTTRLKILIVTHINHAQEINHELQYNINKLHKLGITLLNQSVLLRGINDNAKILSQLSNKLFDINILPYYLHILDKVKSTTHFYVSEKQASIIVVELLSMISGFLVPKLVCEHPGKNSKIYINLNMK.

In terms of domain architecture, Radical SAM core spans 106–321 (RKYNNRILLL…SMISGFLVPK (216 aa)). Cysteine 120, cysteine 124, and cysteine 127 together coordinate [4Fe-4S] cluster. Lysine 332 carries the N6-(pyridoxal phosphate)lysine modification.

It belongs to the radical SAM superfamily. KamA family. [4Fe-4S] cluster is required as a cofactor. Pyridoxal 5'-phosphate serves as cofactor.

The catalysed reaction is L-lysine = D-beta-lysine. Functionally, with EpmA is involved in the beta-lysylation step of the post-translational modification of translation elongation factor P (EF-P) on 'Lys-34'. EpmB appears to act before EpmA. Displays lysine 2,3-aminomutase activity, producing (R)-beta-lysine from (S)-alpha-lysine (L-lysine). This chain is L-lysine 2,3-aminomutase (epmB), found in Buchnera aphidicola subsp. Baizongia pistaciae (strain Bp).